The chain runs to 281 residues: Acetyl-coenzyme A carboxylase carboxyl transferase subunit beta 2 (281 aa).

The 256-residue stretch at 26–281 (LLTRCPVCHE…TITQGGHQDV (256 aa)) folds into the CoA carboxyltransferase N-terminal domain. Zn(2+) is bound by residues Cys-30, Cys-33, Cys-48, and Cys-51. Residues 30–51 (CPVCHEDCYTQDLGEFKVCPHC) form a C4-type zinc finger.

The protein belongs to the AccD/PCCB family. Acetyl-CoA carboxylase is a heterohexamer composed of biotin carboxyl carrier protein (AccB), biotin carboxylase (AccC) and two subunits each of ACCase subunit alpha (AccA) and ACCase subunit beta (AccD). Requires Zn(2+) as cofactor.

The protein resides in the cytoplasm. The enzyme catalyses N(6)-carboxybiotinyl-L-lysyl-[protein] + acetyl-CoA = N(6)-biotinyl-L-lysyl-[protein] + malonyl-CoA. It functions in the pathway lipid metabolism; malonyl-CoA biosynthesis; malonyl-CoA from acetyl-CoA: step 1/1. Its function is as follows. Component of the acetyl coenzyme A carboxylase (ACC) complex. Biotin carboxylase (BC) catalyzes the carboxylation of biotin on its carrier protein (BCCP) and then the CO(2) group is transferred by the transcarboxylase to acetyl-CoA to form malonyl-CoA. The protein is Acetyl-coenzyme A carboxylase carboxyl transferase subunit beta 2 of Lactiplantibacillus plantarum (strain JDM1) (Lactobacillus plantarum).